The following is a 215-amino-acid chain: Ribonuclease HII (215 aa).

Residues 19–214 (KNVIGVDEAG…KILETEEEKT (196 aa)) form the RNase H type-2 domain. A divalent metal cation contacts are provided by D25, E26, and D121.

The protein belongs to the RNase HII family. Mn(2+) serves as cofactor. Requires Mg(2+) as cofactor.

Its subcellular location is the cytoplasm. The enzyme catalyses Endonucleolytic cleavage to 5'-phosphomonoester.. In terms of biological role, endonuclease that specifically degrades the RNA of RNA-DNA hybrids. This chain is Ribonuclease HII, found in Fusobacterium nucleatum subsp. nucleatum (strain ATCC 25586 / DSM 15643 / BCRC 10681 / CIP 101130 / JCM 8532 / KCTC 2640 / LMG 13131 / VPI 4355).